A 45-amino-acid chain; its full sequence is Thymosin beta (45 aa).

The tract at residues 1–45 is disordered; sequence MADKPNMTEITSFDKTKLRKTETQEKNPLPTKETIEQERQGESTP. Basic and acidic residues-rich tracts occupy residues 12–25 and 33–45; these read SFDK…ETQE and ETIE…ESTP.

It belongs to the thymosin beta family.

Its subcellular location is the cytoplasm. It is found in the cytoskeleton. In terms of biological role, plays an important role in the organization of the cytoskeleton. Binds to and sequesters actin monomers (G actin) and therefore inhibits actin polymerization. The protein is Thymosin beta (tmsb) of Danio rerio (Zebrafish).